The following is a 46-amino-acid chain: Aspartate aminotransferase 1 (46 aa).

Belongs to the class-I pyridoxal-phosphate-dependent aminotransferase family. As to quaternary structure, homodimer. Pyridoxal 5'-phosphate serves as cofactor.

The enzyme catalyses L-aspartate + 2-oxoglutarate = oxaloacetate + L-glutamate. In terms of biological role, important for the metabolism of amino acids and Krebs-cycle related organic acids. In plants, it is involved in nitrogen metabolism and in aspects of carbon and energy metabolism. The chain is Aspartate aminotransferase 1 from Pseudotsuga menziesii (Douglas-fir).